A 303-amino-acid chain; its full sequence is MDKVIQELKELEVGKVLENEPLSNHTTIKIGGPADVLVIPKDIQAVKDTMKVVKKHGVKWTAIGRGSNLLVLDEGIRGVVIKLGQGLDHMEIDGEQVTVGGGYSVVRLATGISKKGLSGLEFAAGIPGSVGGAVYMNAGAHGSDISKVLVKALILFEDGTIEWLTNEEMAFSYRTSILQNKRPGICLEAVLQLEQKERDQIVAQMQKNKDYRKETQPVSNPCAGSIFRNPLPEHAGRLVEEAGLKGHQIGGAKVSEMHGNFIVNAGGATAKDVLDLIAFIQKTIKEKYDIDMHTEVEIIGEKR.

The 168-residue stretch at 29-196 folds into the FAD-binding PCMH-type domain; the sequence is KIGGPADVLV…LEAVLQLEQK (168 aa). Arginine 174 is an active-site residue. Residue serine 225 is the Proton donor of the active site. The active site involves glutamate 295.

It belongs to the MurB family. The cofactor is FAD.

Its subcellular location is the cytoplasm. It carries out the reaction UDP-N-acetyl-alpha-D-muramate + NADP(+) = UDP-N-acetyl-3-O-(1-carboxyvinyl)-alpha-D-glucosamine + NADPH + H(+). It functions in the pathway cell wall biogenesis; peptidoglycan biosynthesis. Functionally, cell wall formation. This Bacillus licheniformis (strain ATCC 14580 / DSM 13 / JCM 2505 / CCUG 7422 / NBRC 12200 / NCIMB 9375 / NCTC 10341 / NRRL NRS-1264 / Gibson 46) protein is UDP-N-acetylenolpyruvoylglucosamine reductase.